Here is a 310-residue protein sequence, read N- to C-terminus: Forkhead box protein pes-1 (310 aa).

Polar residues predominate over residues 1–16 (MLPLSISTSPDPASQF). Disordered regions lie at residues 1 to 37 (MLPLSISTSPDPASQFPTVPDLPTLTPTPSPTSGTAK), 58 to 77 (VSPSSTGLLEPKSSTVSPAP), 92 to 126 (KQSSSGVSSTRTSSLEPKSSAVSPAPSSPEASNPN), and 217 to 242 (SLRRKKNGKPRKYSKRSNTVSNPNPI). Low complexity predominate over residues 17 to 35 (PTVPDLPTLTPTPSPTSGT). A DNA-binding region (fork-head) is located at residues 128 to 220 (RPAYSYNALI…IGKDCGSLRR (93 aa)). Basic residues predominate over residues 218 to 231 (LRRKKNGKPRKYSK).

The protein localises to the nucleus. The protein resides in the cytoplasm. Transcription factor. Plays a role in embryogenesis and later development, perhaps acting redundantly with forkhead protein fkh-2. The polypeptide is Forkhead box protein pes-1 (Caenorhabditis briggsae).